The sequence spans 547 residues: Chaperonin GroEL 2 (547 aa).

Residues 30-33 (TLGP), lysine 51, 87-91 (DGTTT), glycine 415, 479-481 (NAA), and aspartate 495 contribute to the ATP site. Residues 526-547 (KEESAAPAGGGMGGMGGMGGMM) form a disordered region. The segment covering 533–547 (AGGGMGGMGGMGGMM) has biased composition (gly residues).

Belongs to the chaperonin (HSP60) family. In terms of assembly, forms a cylinder of 14 subunits composed of two heptameric rings stacked back-to-back. Interacts with the co-chaperonin GroES.

It is found in the cytoplasm. It carries out the reaction ATP + H2O + a folded polypeptide = ADP + phosphate + an unfolded polypeptide.. Its function is as follows. Together with its co-chaperonin GroES, plays an essential role in assisting protein folding. The GroEL-GroES system forms a nano-cage that allows encapsulation of the non-native substrate proteins and provides a physical environment optimized to promote and accelerate protein folding. This chain is Chaperonin GroEL 2, found in Anaeromyxobacter sp. (strain Fw109-5).